The primary structure comprises 515 residues: 2,3-bisphosphoglycerate-independent phosphoglycerate mutase (515 aa).

Positions 14 and 64 each coordinate Mn(2+). Residue Ser64 is the Phosphoserine intermediate of the active site. Substrate is bound by residues His125, 155 to 156 (RD), Arg187, Arg193, 263 to 266 (RADR), and Lys337. Residues Asp404, His408, Asp445, His446, and His464 each coordinate Mn(2+).

It belongs to the BPG-independent phosphoglycerate mutase family. Monomer. Mn(2+) is required as a cofactor.

It catalyses the reaction (2R)-2-phosphoglycerate = (2R)-3-phosphoglycerate. The protein operates within carbohydrate degradation; glycolysis; pyruvate from D-glyceraldehyde 3-phosphate: step 3/5. In terms of biological role, catalyzes the interconversion of 2-phosphoglycerate and 3-phosphoglycerate. The sequence is that of 2,3-bisphosphoglycerate-independent phosphoglycerate mutase from Pseudomonas paraeruginosa (strain DSM 24068 / PA7) (Pseudomonas aeruginosa (strain PA7)).